A 380-amino-acid chain; its full sequence is Protein phosphatase methylesterase 1 (380 aa).

Residues 1 to 38 are disordered; the sequence is MSALEKSMHLGRLPSRPPLPGSGGSQSGAKMRMGPGRK. Serine 15 is subject to Phosphoserine. Position 16 is an asymmetric dimethylarginine; alternate (arginine 16). Arginine 16 is modified (omega-N-methylarginine; alternate). Residue serine 42 is modified to Phosphoserine. Active-site residues include serine 156 and aspartate 181. Residues 255-265 are compositionally biased toward acidic residues; that stretch reads IEEEEEDEEGS. Residues 255-280 form a disordered region; sequence IEEEEEDEEGSESVNKRKKEDDMETK. A compositionally biased stretch (basic and acidic residues) spans 268–280; sequence VNKRKKEDDMETK. Residue histidine 349 is part of the active site.

Belongs to the AB hydrolase superfamily. As to quaternary structure, binds PPP2CA and PPP2CB. Post-translationally, phosphorylated by SIK1 following increases in intracellular sodium, leading to dissociation from the protein phosphatase 2A (PP2A) complex and subsequent dephosphorylation of sodium/potassium-transporting ATPase ATP1A1.

The catalysed reaction is [phosphatase 2A protein]-C-terminal L-leucine methyl ester + H2O = [phosphatase 2A protein]-C-terminal L-leucine + methanol + H(+). Its function is as follows. Demethylates proteins that have been reversibly carboxymethylated. Demethylates PPP2CB (in vitro) and PPP2CA. Binding to PPP2CA displaces the manganese ion and inactivates the enzyme. This chain is Protein phosphatase methylesterase 1 (PPME1), found in Bos taurus (Bovine).